A 500-amino-acid chain; its full sequence is Protein PIGMENT DEFECTIVE 338, chloroplastic (500 aa).

The transit peptide at 1–63 (MQTLLCQPCK…FAFRGFSICR (63 aa)) directs the protein to the chloroplast. S1 motif domains lie at 156–265 (KPGD…LSSR), 283–351 (NEPI…LSEK), and 362–431 (GTLL…LSIA).

This sequence belongs to the bacterial ribosomal protein bS1 family. In terms of assembly, interacts with CRP1 and PRFB3. Present in leaves (at protein level). Confined to leaf chlorenchyma cells.

It localises to the plastid. Its subcellular location is the chloroplast. Functionally, RNA-binding protein that acts as an RNA chaperone to remodel RNA structure and activates their translation. Required for seed pigmentation. Necessary for chloroplast development and subsequent photosynthetic electron flow, as well as for non-photochemical quenching (NPQ). Rubisco regulatory factor which regulates the concerted biogenesis of NDH, PSI (including PsaA, PsaB, PsaD, PsaF, PsaL, PsaG, PsaK and NdhH) and Cytb(6)f (including PetA, PetB, PetC and PetD) complexes. Binds specifically to and involved in the post-transcriptional regulation of plastid-encoded mRNAs (e.g. rbcL, petA, petB, petD and Ycf1), thus modulating expression, cellular localization/compartmentalization, and photosynthetic function. This Arabidopsis thaliana (Mouse-ear cress) protein is Protein PIGMENT DEFECTIVE 338, chloroplastic.